The sequence spans 197 residues: Putative RNA polymerase II subunit B1 CTD phosphatase rtr1 (197 aa).

The segment at 60 to 139 (EARKYLRKSD…LSDEPLWIRE (80 aa)) adopts an RTR1-type zinc-finger fold. Cys-83, Cys-88, Cys-115, and Cys-119 together coordinate Zn(2+).

This sequence belongs to the RPAP2 family.

Its subcellular location is the cytoplasm. The protein localises to the nucleus. It catalyses the reaction O-phospho-L-seryl-[protein] + H2O = L-seryl-[protein] + phosphate. The catalysed reaction is O-phospho-L-threonyl-[protein] + H2O = L-threonyl-[protein] + phosphate. Putative RNA polymerase II subunit B1 C-terminal domain (CTD) phosphatase involved in RNA polymerase II transcription regulation. This Schizosaccharomyces pombe (strain 972 / ATCC 24843) (Fission yeast) protein is Putative RNA polymerase II subunit B1 CTD phosphatase rtr1.